Reading from the N-terminus, the 76-residue chain is Esculentin-2MT2 (76 aa).

An N-terminal signal peptide occupies residues 1 to 22 (MFTLKKSMLLLFFLGTISLSLC). Positions 23 to 37 (EEERSADEDDGEKEV) are cleaved as a propeptide — removed in mature form. An intrachain disulfide couples cysteine 70 to cysteine 76.

Belongs to the frog skin active peptide (FSAP) family. Esculentin subfamily. In terms of tissue distribution, expressed by the skin glands.

It localises to the secreted. Functionally, antimicrobial peptide. Active against a variety of Gram-negative and Gram-positive bacterial strains. Active against fungi. Shows strong hemolytic activity against human erythrocytes. The sequence is that of Esculentin-2MT2 from Amolops mantzorum (Sichuan torrent frog).